Reading from the N-terminus, the 551-residue chain is Crossover junction endonuclease EME1B (551 aa).

Disordered regions lie at residues 1–55 and 187–239; these read MNDH…PIFV and TTLP…RLEK. A compositionally biased stretch (polar residues) spans 37 to 51; it reads SDPTPQKQPPESSFT. Basic and acidic residues predominate over residues 202–239; sequence SKEDKTSAMEEKKLRKEQERLEKAASKAEEAERKRLEK. A coiled-coil region spans residues 203–253; the sequence is KEDKTSAMEEKKLRKEQERLEKAASKAEEAERKRLEKEKKKWEKGKLALKS. An ERCC4 domain is found at 287–484; sequence NPIERSIVWT…PSMKSLLKVY (198 aa).

The protein belongs to the EME1/MMS4 family. Forms a heterodimer with MUS81. Mg(2+) is required as a cofactor. It depends on Ca(2+) as a cofactor.

It is found in the nucleus. Its function is as follows. Interacts with MUS81 to form a DNA structure-specific endonuclease with substrate preference for branched DNA structures with a 5'-end at the branch nick. Typical substrates include 3'-flap structures, D-loops, replication forks, nicked Holliday junctions and also intact Holliday junctions with a reduced efficiency. May be required in mitosis for the processing of stalled or collapsed replication fork intermediates. Plays a role in DNA repair and in genotoxic stress-induced homologous recombination (HR) in somatic cells. Mediates a subset of meiotic recombination events that are insensitive to crossover interference. This Arabidopsis thaliana (Mouse-ear cress) protein is Crossover junction endonuclease EME1B (EME1B).